Consider the following 690-residue polypeptide: Protein AC23 (690 aa).

Residues 1 to 37 form the signal peptide; that stretch reads MLACKFSQYQAFIMDGVKLLGTCALIILLSTTSTVVG.

Its subcellular location is the virion. Functionally, pathogenicity factor that accelerates mortality in the host insect. The sequence is that of Protein AC23 from Autographa californica nuclear polyhedrosis virus (AcMNPV).